Reading from the N-terminus, the 1125-residue chain is Angiopoietin-1 receptor (1125 aa).

The N-terminal stretch at 1-22 is a signal peptide; the sequence is MDSLAGLVLCGVSLLLSATVDG. The Extracellular portion of the chain corresponds to 23 to 748; the sequence is AMDLILINSL…PADLGGRKML (726 aa). Cysteine 44 and cysteine 102 are disulfide-bonded. Residues 44 to 123 enclose the Ig-like C2-type 1 domain; it reads CIASGWRPHE…RTMKMRQQAS (80 aa). The N-linked (GlcNAc...) asparagine glycan is linked to asparagine 158. EGF-like domains are found at residues 210–252, 254–299, and 301–341; these read RCEA…RTCE, ACEP…LQCN, and ACQP…LQCE. Disulfide bonds link cysteine 211/cysteine 220, cysteine 224/cysteine 233, cysteine 227/cysteine 240, cysteine 242/cysteine 251, cysteine 255/cysteine 264, cysteine 268/cysteine 274, cysteine 280/cysteine 287, cysteine 289/cysteine 298, cysteine 302/cysteine 311, cysteine 315/cysteine 323, cysteine 317/cysteine 329, cysteine 331/cysteine 340, and cysteine 370/cysteine 424. In terms of domain architecture, Ig-like C2-type 2 spans 350–440; it reads PKIEDLPDHI…GMVEKPFNIS (91 aa). 3 Fibronectin type-III domains span residues 447-541, 545-637, and 642-735; these read PLNA…TASI, PPRG…TLSD, and QPEN…TLSE. The chain crosses the membrane as a helical span at residues 749–769; that stretch reads LIAILGSAGMTCLTVLLAFLI. Residues 770–1125 lie on the Cytoplasmic side of the membrane; the sequence is MLQLKRANVQ…GIDCSAEEAA (356 aa). The Protein kinase domain maps to 825–1097; the sequence is IKFQDVIGEG…QILVSLNRML (273 aa). Residues 831–839 and lysine 856 contribute to the ATP site; that span reads IGEGNFGQV. Tyrosine 861 carries the post-translational modification Phosphotyrosine; by autocatalysis. The active-site Proton acceptor is the aspartate 965. A phosphotyrosine; by autocatalysis mark is found at tyrosine 993, tyrosine 1103, and tyrosine 1109.

The protein belongs to the protein kinase superfamily. Tyr protein kinase family. Tie subfamily. In terms of assembly, homodimer. Heterodimer with TIE1. Interacts with ANGPT1, ANGPT2 and ANGPT4. At cell-cell contacts in quiescent cells, forms a signaling complex composed of ANGPT1 plus TEK molecules from two adjoining cells. In the absence of endothelial cell-cell contacts, interaction with ANGPT1 mediates contacts with the extracellular matrix. Interacts (tyrosine phosphorylated) with TNIP2. Interacts (tyrosine phosphorylated) with SHC1 (via SH2 domain). Interacts with PTPRB; this promotes endothelial cell-cell adhesion. Interacts with DOK2, GRB2, GRB7, GRB14, PIK3R1 and PTPN11/SHP2. Colocalizes with DOK2 at contacts with the extracellular matrix in migrating cells. Post-translationally, proteolytic processing leads to the shedding of the extracellular domain (soluble TIE-2 alias sTIE-2). In terms of processing, autophosphorylated on tyrosine residues in response to ligand binding. Autophosphorylation occurs in trans, i.e. one subunit of the dimeric receptor phosphorylates tyrosine residues on the other subunit. Autophosphorylation occurs in a sequential manner, where Tyr-993 in the kinase activation loop is phosphorylated first, followed by autophosphorylation at Tyr-1109 and at additional tyrosine residues. ANGPT1-induced phosphorylation is impaired during hypoxia, due to increased expression of ANGPT2. Phosphorylation is important for interaction with GRB14, PIK3R1 and PTPN11. Phosphorylation at Tyr-1103 is important for interaction with GRB2 and GRB7. Phosphorylation at Tyr-1109 is important for interaction with DOK2 and for coupling to downstream signal transduction pathways in endothelial cells. Dephosphorylated by PTPRB. Ubiquitinated. The phosphorylated receptor is ubiquitinated and internalized, leading to its degradation. In terms of tissue distribution, specifically expressed in developing vascular endothelial cells.

Its subcellular location is the cell membrane. It is found in the cell junction. The protein localises to the focal adhesion. It localises to the cytoplasm. The protein resides in the cytoskeleton. Its subcellular location is the secreted. The enzyme catalyses L-tyrosyl-[protein] + ATP = O-phospho-L-tyrosyl-[protein] + ADP + H(+). With respect to regulation, angiopoietin binding leads to receptor dimerization and activation by autophosphorylation at Tyr-993 on the kinase activation loop. In terms of biological role, tyrosine-protein kinase that acts as a cell-surface receptor for ANGPT1, ANGPT2 and ANGPT4 and regulates angiogenesis, endothelial cell survival, proliferation, migration, adhesion and cell spreading, reorganization of the actin cytoskeleton, but also maintenance of vascular quiescence. Has anti-inflammatory effects by preventing the leakage of pro-inflammatory plasma proteins and leukocytes from blood vessels. Required for normal angiogenesis and heart development during embryogenesis. Required for post-natal hematopoiesis. After birth, activates or inhibits angiogenesis, depending on the context. Inhibits angiogenesis and promotes vascular stability in quiescent vessels, where endothelial cells have tight contacts. In quiescent vessels, ANGPT1 oligomers recruit TEK to cell-cell contacts, forming complexes with TEK molecules from adjoining cells, and this leads to preferential activation of phosphatidylinositol 3-kinase and the AKT1 signaling cascades. In migrating endothelial cells that lack cell-cell adhesions, ANGT1 recruits TEK to contacts with the extracellular matrix, leading to the formation of focal adhesion complexes, activation of PTK2/FAK and of the downstream kinases MAPK1/ERK2 and MAPK3/ERK1, and ultimately to the stimulation of sprouting angiogenesis. ANGPT1 signaling triggers receptor dimerization and autophosphorylation at specific tyrosine residues that then serve as binding sites for scaffold proteins and effectors. Signaling is modulated by ANGPT2 that has lower affinity for TEK, can promote TEK autophosphorylation in the absence of ANGPT1, but inhibits ANGPT1-mediated signaling by competing for the same binding site. Signaling is also modulated by formation of heterodimers with TIE1, and by proteolytic processing that gives rise to a soluble TEK extracellular domain. The soluble extracellular domain modulates signaling by functioning as decoy receptor for angiopoietins. TEK phosphorylates DOK2, GRB7, GRB14, PIK3R1, SHC1 and TIE1. The sequence is that of Angiopoietin-1 receptor (TEK) from Bos taurus (Bovine).